A 104-amino-acid chain; its full sequence is Large ribosomal subunit protein uL24 (104 aa).

This sequence belongs to the universal ribosomal protein uL24 family. Part of the 50S ribosomal subunit.

Functionally, one of two assembly initiator proteins, it binds directly to the 5'-end of the 23S rRNA, where it nucleates assembly of the 50S subunit. Its function is as follows. One of the proteins that surrounds the polypeptide exit tunnel on the outside of the subunit. The sequence is that of Large ribosomal subunit protein uL24 from Chelativorans sp. (strain BNC1).